The following is a 286-amino-acid chain: 2,3,4,5-tetrahydropyridine-2,6-dicarboxylate N-succinyltransferase (286 aa).

This sequence belongs to the transferase hexapeptide repeat family.

It is found in the cytoplasm. The enzyme catalyses (S)-2,3,4,5-tetrahydrodipicolinate + succinyl-CoA + H2O = (S)-2-succinylamino-6-oxoheptanedioate + CoA. The protein operates within amino-acid biosynthesis; L-lysine biosynthesis via DAP pathway; LL-2,6-diaminopimelate from (S)-tetrahydrodipicolinate (succinylase route): step 1/3. The protein is 2,3,4,5-tetrahydropyridine-2,6-dicarboxylate N-succinyltransferase of Rhizobium leguminosarum bv. trifolii (strain WSM2304).